The chain runs to 463 residues: Serine/threonine-protein kinase sgk-1 (463 aa).

The Protein kinase domain occupies 135-392 (FDYLTTIGKG…FRDIRDHPFF (258 aa)). ATP contacts are provided by residues 141–149 (IGKGSFGRV) and Lys-164. Asp-259 functions as the Proton acceptor in the catalytic mechanism. One can recognise an AGC-kinase C-terminal domain in the interval 393–463 (LPVDWDKLLN…TFVDTNRVLV (71 aa)).

It belongs to the protein kinase superfamily. AGC Ser/Thr protein kinase family. Interacts with pdk-1, akt-1, akt-2 and daf-16. Part of a complex containing sgk-1, akt-1 and akt-2. Interacts with let-92 phosphatase regulatory subunit pptr-1. Mg(2+) serves as cofactor. Expressed in late embryos just before hatching. At postembryonic stages, expressed in sensory and motor neurons and in the intestine. Highly expressed in the intestine and head and tail neurons.

It localises to the cytoplasm. The protein resides in the nucleus. The protein localises to the apical cell membrane. It carries out the reaction L-seryl-[protein] + ATP = O-phospho-L-seryl-[protein] + ADP + H(+). It catalyses the reaction L-threonyl-[protein] + ATP = O-phospho-L-threonyl-[protein] + ADP + H(+). With respect to regulation, phosphorylated and activated by pdk-1. Acts downstream of PI3 kinase age-1 and kinase pdk-1 in the daf-2/insulin receptor-like transduction pathway. Essential role in regulating development, stress response, and longevity. Phosphorylates Forkhead-related daf-16 and the longevity-promoting skn-1 transcription factors, which inhibits their entry into the nucleus and antagonizes their function. Promotes the cytoplasmic localization of the transcription factor pqm-1. Plays a role in the intracellular trafficking of proteins such as mig-14 to the cell membrane, and this may be through positively regulating ceramide synthesis. Acts downstream of rict-1 to regulate fat storage, size, development and vitellogenesis. Downstream of age-1 and together with akt-1/2, promotes cell survival during embryonic development. Plays a role in maintaining the gonadal basement membrane through antagonizing akt-1 activity. Does not appear to play a role in immune function. The sequence is that of Serine/threonine-protein kinase sgk-1 from Caenorhabditis elegans.